The chain runs to 1015 residues: DNA polymerase catalytic subunit (1015 aa).

It belongs to the DNA polymerase type-B family. Forms a complex with the major DNA-binding protein BALF2, the DNA polymerase processivity factor BMRF1, and the alkaline exonuclease BGLF5. Interacts with the putative helicase-primase complex composed of BBLF4, BSLF1 and BBLF2/3 proteins; these interactions may coordinate leading and lagging strand DNA synthesis at the replication fork.

The protein localises to the host nucleus. The catalysed reaction is DNA(n) + a 2'-deoxyribonucleoside 5'-triphosphate = DNA(n+1) + diphosphate. In terms of biological role, replicates viral genomic DNA in the late phase of lytic infection, producing long concatemeric DNA. The replication complex is composed of six viral proteins: the DNA polymerase, processivity factor, primase, primase-associated factor, helicase, and ssDNA-binding protein. The polypeptide is DNA polymerase catalytic subunit (Homo sapiens (Human)).